The primary structure comprises 63 residues: Adipokinetic prohormone type 1 (63 aa).

Residues 1–22 form the signal peptide; sequence MVQRCLVVALLVVVVAAALCSA. Gln23 carries the pyrrolidone carboxylic acid modification. Thr32 bears the Threonine amide mark.

Belongs to the AKH/HRTH/RPCH family. As to quaternary structure, adipokinetic hormone precursor-related peptide (APRP) can form three type of disulfide-bond dimers: p1 (alpha-alpha), p2 (alpha-beta), and p3 (beta-beta).

It is found in the secreted. In terms of biological role, this hormone, released from cells in the corpora cardiaca, causes release of diglycerides from the fat body and stimulation of muscles to use these diglycerides as an energy source during energy-demanding processes. In Schistocerca gregaria (Desert locust), this protein is Adipokinetic prohormone type 1.